We begin with the raw amino-acid sequence, 342 residues long: DNA primase (342 aa).

Residues Cys-37, Cys-40, Cys-65, and Cys-68 each coordinate Zn(2+).

Belongs to the Tequatrovirus DNA primase family. In terms of assembly, monomer. Hexamer. Interacts with the DnaB-like replicative helicase; this interaction forms the active primosome complex, which is composed of 6 helicase and 1 primase subunits and expresses full helicase and primase activities. Interacts (via C-terminus) with the single-stranded DNA-binding protein. Part of the replicase complex that includes the DNA polymerase, the polymerase clamp, the clamp loader complex, the single-stranded DNA binding protein, the primase, the DnaB-like replicative helicase and the helicase assembly factor.

In terms of biological role, synthesizes short RNA primers for the lagging strand DNA replication. The primase synthesizes short RNA primers on the lagging strand that the polymerase elongates using dNTPs. Recognizes two trinucleotide sequences 5'-GTT-3' and 5'-GCT-3' in vitro, but uses only the first as the priming site in vivo. This chain is DNA primase (61), found in Escherichia coli (Bacteriophage T4).